Reading from the N-terminus, the 434-residue chain is Beta-glucuronosyltransferase GlcAT14B (434 aa).

Residues 1-21 (MKKLKSYYMQVRNQQQSLDRK) lie on the Cytoplasmic side of the membrane. Residues 22–42 (WILPLAIGSICSLFLLLLTNL) form a signal-anchor for type II membrane protein membrane-spanning segment. Over 43–434 (ASSSGQTRLI…TENFRPRQCR (392 aa)) the chain is Lumenal. 4 N-linked (GlcNAc...) asparagine glycosylation sites follow: Asn-138, Asn-187, Asn-316, and Asn-392.

Belongs to the glycosyltransferase 14 family.

The protein resides in the golgi apparatus membrane. Beta-glucuronosyltransferase involved in the biosynthesis of type II arabinogalactan (AG). Modifies both the beta-1,6-linked galactan and beta-1,3-linked galactan present in type II AG. This is Beta-glucuronosyltransferase GlcAT14B from Arabidopsis thaliana (Mouse-ear cress).